The primary structure comprises 620 residues: Chaperone protein HscA homolog (620 aa).

The protein belongs to the heat shock protein 70 family.

In terms of biological role, chaperone involved in the maturation of iron-sulfur cluster-containing proteins. Has a low intrinsic ATPase activity which is markedly stimulated by HscB. The protein is Chaperone protein HscA homolog of Shewanella oneidensis (strain ATCC 700550 / JCM 31522 / CIP 106686 / LMG 19005 / NCIMB 14063 / MR-1).